Consider the following 637-residue polypeptide: Extracellular metalloproteinase 10 (637 aa).

Positions 1–19 (MHGLLLAATLLSLPFNAVA) are cleaved as a signal peptide. A propeptide spanning residues 20-245 (HVPPTTGLVR…VHNVVDYVAH (226 aa)) is cleaved from the precursor. The N-linked (GlcNAc...) asparagine glycan is linked to N282. A Zn(2+)-binding site is contributed by H429. E430 is a catalytic residue. H433 contributes to the Zn(2+) binding site. N502 carries N-linked (GlcNAc...) asparagine glycosylation.

This sequence belongs to the peptidase M36 family. The cofactor is Zn(2+).

It localises to the secreted. Functionally, secreted metalloproteinase that allows assimilation of proteinaceous substrates. The chain is Extracellular metalloproteinase 10 (MEP10) from Uncinocarpus reesii (strain UAMH 1704).